We begin with the raw amino-acid sequence, 363 residues long: 3-dehydroquinate synthase (363 aa).

NAD(+)-binding positions include 75–80, 109–113, 133–134, Lys-146, Lys-155, and 173–176; these read DAEEGK, GAVTD, TS, and TLST. Positions 188, 251, and 267 each coordinate Zn(2+).

It belongs to the sugar phosphate cyclases superfamily. Dehydroquinate synthase family. Requires Co(2+) as cofactor. Zn(2+) is required as a cofactor. The cofactor is NAD(+).

The protein resides in the cytoplasm. The enzyme catalyses 7-phospho-2-dehydro-3-deoxy-D-arabino-heptonate = 3-dehydroquinate + phosphate. It participates in metabolic intermediate biosynthesis; chorismate biosynthesis; chorismate from D-erythrose 4-phosphate and phosphoenolpyruvate: step 2/7. Its function is as follows. Catalyzes the conversion of 3-deoxy-D-arabino-heptulosonate 7-phosphate (DAHP) to dehydroquinate (DHQ). This Arthrobacter sp. (strain FB24) protein is 3-dehydroquinate synthase.